Reading from the N-terminus, the 246-residue chain is 5-oxoprolinase subunit A (246 aa).

This sequence belongs to the LamB/PxpA family. Forms a complex composed of PxpA, PxpB and PxpC.

The catalysed reaction is 5-oxo-L-proline + ATP + 2 H2O = L-glutamate + ADP + phosphate + H(+). Its function is as follows. Catalyzes the cleavage of 5-oxoproline to form L-glutamate coupled to the hydrolysis of ATP to ADP and inorganic phosphate. The sequence is that of 5-oxoprolinase subunit A from Cupriavidus metallidurans (strain ATCC 43123 / DSM 2839 / NBRC 102507 / CH34) (Ralstonia metallidurans).